Here is a 128-residue protein sequence, read N- to C-terminus: Large ribosomal subunit protein bL20 (128 aa).

This sequence belongs to the bacterial ribosomal protein bL20 family.

Functionally, binds directly to 23S ribosomal RNA and is necessary for the in vitro assembly process of the 50S ribosomal subunit. It is not involved in the protein synthesizing functions of that subunit. This Anaplasma phagocytophilum (strain HZ) protein is Large ribosomal subunit protein bL20.